Reading from the N-terminus, the 404-residue chain is Multidrug resistance protein MdtG (404 aa).

11 helical membrane passes run 19–39 (LGCF…PLYV), 56–76 (LVFS…GGLA), 90–110 (LGMA…QFLI), 113–133 (ALLG…ATQV), 144–164 (TLST…GLLA), 171–191 (PVFF…FFFI), 222–242 (LFVT…ILTL), 254–274 (IAFI…LSAP), 288–308 (ILIV…FVQT), 317–337 (FLLG…LVYN), and 376–396 (AVFC…WNSL).

The protein belongs to the major facilitator superfamily. DHA1 family. MdtG (TC 2.A.1.2.20) subfamily.

It localises to the cell inner membrane. This chain is Multidrug resistance protein MdtG, found in Salmonella schwarzengrund (strain CVM19633).